The chain runs to 467 residues: Neutral protease 2 homolog NFIA_031120 (467 aa).

Positions 1–19 (MKITALASAILAVVHGALA) are cleaved as a signal peptide. A propeptide spanning residues 20–172 (LPARAPALDI…PASIKPLDRR (153 aa)) is cleaved from the precursor. 2 cysteine pairs are disulfide-bonded: cysteine 179-cysteine 251 and cysteine 258-cysteine 276. Histidine 300 provides a ligand contact to Zn(2+). Residue glutamate 301 is part of the active site. Histidine 304 and aspartate 315 together coordinate Zn(2+). Polar residues predominate over residues 359–451 (WDGNSQPGQT…TMWDGSSEPG (93 aa)). A disordered region spans residues 359-467 (WDGNSQPGQT…HTTWGNFYQA (109 aa)).

Belongs to the peptidase M35 family. Requires Zn(2+) as cofactor.

The protein localises to the secreted. The catalysed reaction is Preferential cleavage of bonds with hydrophobic residues in P1'. Also 3-Asn-|-Gln-4 and 8-Gly-|-Ser-9 bonds in insulin B chain.. In terms of biological role, secreted metalloproteinase that allows assimilation of proteinaceous substrates. Shows high activities on basic nuclear substrates such as histone and protamine. This chain is Neutral protease 2 homolog NFIA_031120, found in Neosartorya fischeri (strain ATCC 1020 / DSM 3700 / CBS 544.65 / FGSC A1164 / JCM 1740 / NRRL 181 / WB 181) (Aspergillus fischerianus).